A 457-amino-acid chain; its full sequence is GTPase Der (457 aa).

2 consecutive EngA-type G domains span residues Pro-4–Asn-169 and Ile-177–Arg-352. GTP-binding positions include Gly-10–Ser-17, Asp-57–Leu-61, Asn-120–Glu-123, Gly-183–Ser-190, Asp-230–Ile-234, and Asn-295–Asp-298. One can recognise a KH-like domain in the interval Arg-353–Gln-438.

The protein belongs to the TRAFAC class TrmE-Era-EngA-EngB-Septin-like GTPase superfamily. EngA (Der) GTPase family. In terms of assembly, associates with the 50S ribosomal subunit.

In terms of biological role, GTPase that plays an essential role in the late steps of ribosome biogenesis. In Prochlorococcus marinus (strain MIT 9215), this protein is GTPase Der.